The following is a 221-amino-acid chain: Thymidylate kinase (221 aa).

11–18 contacts ATP; that stretch reads GPDGAGKT.

It belongs to the thymidylate kinase family.

The catalysed reaction is dTMP + ATP = dTDP + ADP. In terms of biological role, phosphorylation of dTMP to form dTDP in both de novo and salvage pathways of dTTP synthesis. This Lactiplantibacillus plantarum (strain ATCC BAA-793 / NCIMB 8826 / WCFS1) (Lactobacillus plantarum) protein is Thymidylate kinase.